We begin with the raw amino-acid sequence, 360 residues long: MQIKEQLRQLKPYQPGKPIEEVKMEYGLEKVVKLASNENPFGCSQAAKDALHQEIEQLALYPDGYSAALRTRLSEHLQVSESSIIFGNGSDELVQIICRSLLNDQANTITAAPTFPQYRHNAVIEGAEVREVPLRSDGAHDLDRMLEAIDGETKIIWVCNPNNPTGTYTSEQELIAFLNRVPEHILVVLDEAYYEYVTAEDYPESIPLLKQYPNVMILRTFSKAYGLAALRVGYGIADEALIRQIEPAREPFNTSRIGQASALAALDDQTFIQECVEKNKAGLKQYYDFAETHGLTCYPSQTNFVLIDFNRPADELFQALLEKGYIVRSGQALGFPTALRITVGTKEQNEEILTILAEIL.

Lys-223 is modified (N6-(pyridoxal phosphate)lysine).

This sequence belongs to the class-II pyridoxal-phosphate-dependent aminotransferase family. Histidinol-phosphate aminotransferase subfamily. As to quaternary structure, homodimer. Pyridoxal 5'-phosphate serves as cofactor.

The catalysed reaction is L-histidinol phosphate + 2-oxoglutarate = 3-(imidazol-4-yl)-2-oxopropyl phosphate + L-glutamate. It participates in amino-acid biosynthesis; L-histidine biosynthesis; L-histidine from 5-phospho-alpha-D-ribose 1-diphosphate: step 7/9. This is Histidinol-phosphate aminotransferase from Bacillus velezensis (strain DSM 23117 / BGSC 10A6 / LMG 26770 / FZB42) (Bacillus amyloliquefaciens subsp. plantarum).